Here is a 216-residue protein sequence, read N- to C-terminus: Methylthioribulose-1-phosphate dehydratase (216 aa).

Residues H101 and H103 each coordinate Zn(2+).

This sequence belongs to the aldolase class II family. MtnB subfamily. Requires Zn(2+) as cofactor.

The enzyme catalyses 5-(methylsulfanyl)-D-ribulose 1-phosphate = 5-methylsulfanyl-2,3-dioxopentyl phosphate + H2O. Its pathway is amino-acid biosynthesis; L-methionine biosynthesis via salvage pathway; L-methionine from S-methyl-5-thio-alpha-D-ribose 1-phosphate: step 2/6. In terms of biological role, catalyzes the dehydration of methylthioribulose-1-phosphate (MTRu-1-P) into 2,3-diketo-5-methylthiopentyl-1-phosphate (DK-MTP-1-P). This chain is Methylthioribulose-1-phosphate dehydratase, found in Bradyrhizobium sp. (strain BTAi1 / ATCC BAA-1182).